Consider the following 601-residue polypeptide: DNA topoisomerase I, mitochondrial (601 aa).

A mitochondrion-targeting transit peptide spans 1-50; sequence MRVVRLLRLRAALTLLGEVPRRPASRGVPGSRRTQKGSGARWEKEKHEDG. Residues 22–48 are disordered; it reads RPASRGVPGSRRTQKGSGARWEKEKHE. 3 interaction with DNA regions span residues 261–262, 324–329, and 421–423; these read KY, RAGNEK, and TAK. A Topo IB-type catalytic domain is found at 268-601; it reads CSKLKGETAW…LAMAGEDFEF (334 aa). Tyr-559 acts as the O-(3'-phospho-DNA)-tyrosine intermediate in catalysis.

It belongs to the type IB topoisomerase family. The cofactor is Ca(2+). It depends on Mg(2+) as a cofactor. In terms of tissue distribution, ubiquitous; highest in skeletal muscle, heart, brain and fetal liver.

The protein resides in the mitochondrion. It carries out the reaction ATP-independent breakage of single-stranded DNA, followed by passage and rejoining.. In terms of biological role, releases the supercoiling and torsional tension of DNA introduced during duplication of mitochondrial DNA by transiently cleaving and rejoining one strand of the DNA duplex. Introduces a single-strand break via transesterification at a target site in duplex DNA. The scissile phosphodiester is attacked by the catalytic tyrosine of the enzyme, resulting in the formation of a DNA-(3'-phosphotyrosyl)-enzyme intermediate and the expulsion of a 5'-OH DNA strand. The free DNA strand then rotates around the intact phosphodiester bond on the opposing strand, thus removing DNA supercoils. Finally, in the religation step, the DNA 5'-OH attacks the covalent intermediate to expel the active-site tyrosine and restore the DNA phosphodiester backbone. This chain is DNA topoisomerase I, mitochondrial (TOP1MT), found in Homo sapiens (Human).